We begin with the raw amino-acid sequence, 334 residues long: Holliday junction branch migration complex subunit RuvB (334 aa).

The large ATPase domain (RuvB-L) stretch occupies residues 1 to 181; it reads MQDRLISGTE…FGIVQRLEFY (181 aa). Residues Ile-20, Arg-21, Gly-62, Lys-65, Thr-66, Thr-67, 128 to 130, Arg-171, Tyr-181, and Arg-218 contribute to the ATP site; that span reads EDY. Residue Thr-66 coordinates Mg(2+). The interval 182-252 is small ATPAse domain (RuvB-S); the sequence is SVEDLTHIVS…MAQRALDMLN (71 aa). The interval 255 to 334 is head domain (RuvB-H); sequence KAGLDTLDRR…FGMTPPEPKN (80 aa). Residues Arg-310 and Arg-315 each contribute to the DNA site.

This sequence belongs to the RuvB family. In terms of assembly, homohexamer. Forms an RuvA(8)-RuvB(12)-Holliday junction (HJ) complex. HJ DNA is sandwiched between 2 RuvA tetramers; dsDNA enters through RuvA and exits via RuvB. An RuvB hexamer assembles on each DNA strand where it exits the tetramer. Each RuvB hexamer is contacted by two RuvA subunits (via domain III) on 2 adjacent RuvB subunits; this complex drives branch migration. In the full resolvosome a probable DNA-RuvA(4)-RuvB(12)-RuvC(2) complex forms which resolves the HJ.

The protein resides in the cytoplasm. The enzyme catalyses ATP + H2O = ADP + phosphate + H(+). Its function is as follows. The RuvA-RuvB-RuvC complex processes Holliday junction (HJ) DNA during genetic recombination and DNA repair, while the RuvA-RuvB complex plays an important role in the rescue of blocked DNA replication forks via replication fork reversal (RFR). RuvA specifically binds to HJ cruciform DNA, conferring on it an open structure. The RuvB hexamer acts as an ATP-dependent pump, pulling dsDNA into and through the RuvAB complex. RuvB forms 2 homohexamers on either side of HJ DNA bound by 1 or 2 RuvA tetramers; 4 subunits per hexamer contact DNA at a time. Coordinated motions by a converter formed by DNA-disengaged RuvB subunits stimulates ATP hydrolysis and nucleotide exchange. Immobilization of the converter enables RuvB to convert the ATP-contained energy into a lever motion, pulling 2 nucleotides of DNA out of the RuvA tetramer per ATP hydrolyzed, thus driving DNA branch migration. The RuvB motors rotate together with the DNA substrate, which together with the progressing nucleotide cycle form the mechanistic basis for DNA recombination by continuous HJ branch migration. Branch migration allows RuvC to scan DNA until it finds its consensus sequence, where it cleaves and resolves cruciform DNA. The protein is Holliday junction branch migration complex subunit RuvB of Acinetobacter baumannii (strain AB307-0294).